The chain runs to 485 residues: Outer membrane protein OprM (485 aa).

An N-terminal signal peptide occupies residues 1-17; it reads MKRSFLSLAVAAVVLSG. Cys18 is lipidated: N-palmitoyl cysteine. Residue Cys18 is the site of S-diacylglycerol cysteine attachment.

It belongs to the outer membrane factor (OMF) (TC 1.B.17) family. As to quaternary structure, component of the MexAB-OprM multidrug efflux complex, composed of six MexA subunits forming a hexameric tube, binding to a MexB trimer, which interact with the trimeric OprM outer membrane channel protein. The OprM homotrimer forms a 135 Angstroms-long pore. It consists of a beta-barrel, which is probably inserted in the outer membrane, and an alpha-barrel formed by alpha-helices which probably spans the periplasm. In the ground state the periplasmic end is closed, while the outer membrane end opening is 6-8 Angstroms in diameter. OprM does not directly contact MexB; instead, MexA joins MexB and OprM by forming a funnel-like hexamer anchored to the inner membrane. MexA may initially form a hexameric ring complex with MexB prior to OprM, then OprM undergoes a conformational change as it contacts MexA, allowing the periplasmic gate to open. It is thought that, under high intracellular substrate concentration, MexB ejects substrate into the tunnel formed by MexA-OprM; as the substrate level declines, conformational changes in MexB cause efflux to reduce and stop and the complex shifts to the closed state. MexB subunit acts as a substrate:proton antiporter and activity is enhanced significantly when in complex with MexA and OprM, in vitro.

It is found in the cell outer membrane. Export of antibiotics and solvents is dramatically decreased in the presence of the protonophore carbonyl cyanide m-chlorophenylhydrazone (CCCP), therefore may be driven by a proton gradient. Antibiotic efflux is inhibited by pyridopyrimidine derivatives, such as ABI-PP, acting by binding to a hydrophobic pocket in MexB. Its function is as follows. The outer membrane component of the MexAB-OprM efflux system that confers multidrug resistance. Functions as the major efflux pump for n-hexane and p-xylene efflux. Has been shown in one study to be involved in the active efflux of the autoinducer N-(3-oxododecanoyl) homoserine lactone, thereby playing an indirect role in quorum-sensing; but has been shown in another study not to be involved in efflux of this autoinducer. Over-expression of the pump increases antibiotic and solvent efflux capacities. Can replace the OprJ outer membrane component of the MexCD-OprJ pump; the antibiotics exported are those exported by the intact MexCD pump, showing that efflux substrate specificity is not conferred by this component. Serves as the outer membrane component for the MexXY efflux system. Implicated in the secretion of the siderophore pyoverdine. OprM is probably involved in the efflux of the siderophore across the outer membrane. The polypeptide is Outer membrane protein OprM (oprM) (Pseudomonas aeruginosa (strain ATCC 15692 / DSM 22644 / CIP 104116 / JCM 14847 / LMG 12228 / 1C / PRS 101 / PAO1)).